The sequence spans 392 residues: UPF0229 protein CPF_1540 (392 aa).

The interval 75-100 is disordered; sequence VTTGTGEERRGDRISSDKRKAISNNK. Residues 80–94 show a composition bias toward basic and acidic residues; it reads GEERRGDRISSDKRK.

This sequence belongs to the UPF0229 family.

The polypeptide is UPF0229 protein CPF_1540 (Clostridium perfringens (strain ATCC 13124 / DSM 756 / JCM 1290 / NCIMB 6125 / NCTC 8237 / Type A)).